A 391-amino-acid chain; its full sequence is Secreted aspartic protease 1 (391 aa).

The signal sequence occupies residues 1–18 (MFLKNIFIALAIALLVDA). Positions 19-50 (SPAKRSPGFVTLDFDVIKTPVNATGQEGKVKR) are cleaved as a propeptide — activation peptide. Asparagine 40 carries an N-linked (GlcNAc...) asparagine glycan. In terms of domain architecture, Peptidase A1 spans 64–377 (YAADITIGSN…DLDDDKISLA (314 aa)). The active site involves aspartate 82. Residue 82–84 (DTG) coordinates pepstatin A. Cysteine 97 and cysteine 109 are disulfide-bonded. The Zn(2+) site is built by aspartate 241 and aspartate 263. Aspartate 267 is a catalytic residue. Residue 267–271 (DSGTT) participates in pepstatin A binding. A disulfide bond links cysteine 305 and cysteine 343.

Belongs to the peptidase A1 family. In terms of assembly, monomer.

It is found in the secreted. The enzyme catalyses Preferential cleavage at the carboxyl of hydrophobic amino acids, but fails to cleave 15-Leu-|-Tyr-16, 16-Tyr-|-Leu-17 and 24-Phe-|-Phe-25 of insulin B chain. Activates trypsinogen, and degrades keratin.. Inhibited by pepstatin A analogs and squash aspartic peptidase inhibitor (SQAPI). Functionally, secreted aspartic peptidases (SAPs) are a group of ten acidic hydrolases considered as key virulence factors. These enzymes supply the fungus with nutrient amino acids as well as are able to degrade the selected host's proteins involved in the immune defense. Induces host inflammatory cytokine production in a proteolytic activity-independent way. Plays a role in tissue damage during superficial infection. Moreover, acts toward human hemoglobin though limited proteolysis to generate a variety of antimicrobial hemocidins, enabling to compete with the other microorganisms of the same physiological niche using the microbicidal peptides generated from the host protein. Plays a key role in defense against host by cleaving histatin-5 (Hst 5), a peptide from human saliva that carries out fungicidal activity. The cleavage rate decreases in an order of SAP2 &gt; SAP9 &gt; SAP3 &gt; SAP7 &gt; SAP4 &gt; SAP1 &gt; SAP8. The first cleavage occurs between residues 'Lys-17' and 'His-18' of Hst 5, giving DSHAKRHHGYKRKFHEK and HHSHRGY peptides. Further fragmentation by SAP1 results in AKRHHGYKRKFHEK and AKRHHGY products. The protein is Secreted aspartic protease 1 of Candida albicans (Yeast).